The following is a 235-amino-acid chain: Small ribosomal subunit protein eS4 (235 aa).

One can recognise an S4 RNA-binding domain in the interval 43-114 (IPLLLIVRDM…DPHRFLRLIE (72 aa)).

This sequence belongs to the eukaryotic ribosomal protein eS4 family.

This chain is Small ribosomal subunit protein eS4, found in Korarchaeum cryptofilum (strain OPF8).